A 180-amino-acid polypeptide reads, in one-letter code: Nucleoside triphosphate/diphosphate phosphatase (180 aa).

The active-site Proton donor is the Arg26. Residues Asn90, Asp106, Asp108, Asp110, Asp123, and Glu126 each contribute to the Mg(2+) site.

It belongs to the Ntdp family. Mg(2+) serves as cofactor.

It carries out the reaction a ribonucleoside 5'-triphosphate + H2O = a ribonucleoside 5'-diphosphate + phosphate + H(+). The enzyme catalyses a ribonucleoside 5'-diphosphate + H2O = a ribonucleoside 5'-phosphate + phosphate + H(+). In terms of biological role, has nucleoside phosphatase activity towards nucleoside triphosphates and nucleoside diphosphates. In Staphylococcus aureus (strain MSSA476), this protein is Nucleoside triphosphate/diphosphate phosphatase.